A 208-amino-acid polypeptide reads, in one-letter code: Small ribosomal subunit protein uS4 (208 aa).

The S4 RNA-binding domain maps to 98–160 (SRLDNVAYNM…AKSYLRIKSS (63 aa)).

It belongs to the universal ribosomal protein uS4 family. In terms of assembly, part of the 30S ribosomal subunit. Contacts protein S5. The interaction surface between S4 and S5 is involved in control of translational fidelity.

Functionally, one of the primary rRNA binding proteins, it binds directly to 16S rRNA where it nucleates assembly of the body of the 30S subunit. Its function is as follows. With S5 and S12 plays an important role in translational accuracy. The protein is Small ribosomal subunit protein uS4 of Nitrosomonas eutropha (strain DSM 101675 / C91 / Nm57).